The following is a 351-amino-acid chain: MAITPEKEKALAATMAQIDRKFGKGSIMKMGEASSRLAIEAIPTGSIALDIALGIGGVPRGRVVEIFGPESSGKTTLAQHIIAEAQKMGGVCAFIDAEHAFDPVYAARCGVNIDDLLVSQPDTGEQALEICEMLVRSNAIDVIVIDSVAALVPRAEIEGEMGDSMPGMQARLMSQALRKLSGAISKSRTVVIFINQLRMKIGVMFGSPETTTGGQALKFYASVRLDIRRVETLKQGQEAIGSRVRVKVIKNKVAPPFRQAEFDILANEGISREGNIIDIGTELGIIRKSGAWFYLGEDRLGQGRENVREFLKNNPALTDEIERLIKAQALTNPTVIAPSVDVGDDDAIFEE.

68–75 contacts ATP; it reads GPESSGKT.

The protein belongs to the RecA family.

The protein resides in the cytoplasm. In terms of biological role, can catalyze the hydrolysis of ATP in the presence of single-stranded DNA, the ATP-dependent uptake of single-stranded DNA by duplex DNA, and the ATP-dependent hybridization of homologous single-stranded DNAs. It interacts with LexA causing its activation and leading to its autocatalytic cleavage. This chain is Protein RecA, found in Chloroflexus aurantiacus (strain ATCC 29364 / DSM 637 / Y-400-fl).